Here is a 421-residue protein sequence, read N- to C-terminus: Serine hydroxymethyltransferase (421 aa).

(6S)-5,6,7,8-tetrahydrofolate contacts are provided by residues L120 and 124-126; that span reads GHL. The residue at position 229 (K229) is an N6-(pyridoxal phosphate)lysine. 354–356 contacts (6S)-5,6,7,8-tetrahydrofolate; it reads SPF.

This sequence belongs to the SHMT family. As to quaternary structure, homodimer. Requires pyridoxal 5'-phosphate as cofactor.

It is found in the cytoplasm. It carries out the reaction (6R)-5,10-methylene-5,6,7,8-tetrahydrofolate + glycine + H2O = (6S)-5,6,7,8-tetrahydrofolate + L-serine. The protein operates within one-carbon metabolism; tetrahydrofolate interconversion. It participates in amino-acid biosynthesis; glycine biosynthesis; glycine from L-serine: step 1/1. Its function is as follows. Catalyzes the reversible interconversion of serine and glycine with tetrahydrofolate (THF) serving as the one-carbon carrier. This reaction serves as the major source of one-carbon groups required for the biosynthesis of purines, thymidylate, methionine, and other important biomolecules. Also exhibits THF-independent aldolase activity toward beta-hydroxyamino acids, producing glycine and aldehydes, via a retro-aldol mechanism. In Opitutus terrae (strain DSM 11246 / JCM 15787 / PB90-1), this protein is Serine hydroxymethyltransferase.